Here is a 500-residue protein sequence, read N- to C-terminus: NAD(P)H-quinone oxidoreductase chain 4, chloroplastic (500 aa).

Helical transmembrane passes span 3–23, 37–57, 87–107, 113–130, 134–154, 167–187, 208–228, 242–262, 272–292, 305–325, 330–350, 364–384, 386–406, 411–431, and 462–482; these read FFPW…IILF, ICIC…HFQL, IGPI…AWPV, LFHF…GLFA, LLLF…LLSM, FILY…GVGL, ALEI…SPII, HYST…YGLI, AHSI…IYAA, IAYS…SIND, GAIL…FLAG, MGGI…FSMA, LALP…GIIT, LLIS…LTPI, and LFVS…PDFV.

Belongs to the complex I subunit 4 family.

The protein localises to the plastid. Its subcellular location is the chloroplast thylakoid membrane. The catalysed reaction is a plastoquinone + NADH + (n+1) H(+)(in) = a plastoquinol + NAD(+) + n H(+)(out). It catalyses the reaction a plastoquinone + NADPH + (n+1) H(+)(in) = a plastoquinol + NADP(+) + n H(+)(out). This chain is NAD(P)H-quinone oxidoreductase chain 4, chloroplastic, found in Daucus carota (Wild carrot).